A 105-amino-acid chain; its full sequence is TPR repeat-containing protein PA0015 (105 aa).

TPR repeat units lie at residues 17–50 (ALLR…DPKY) and 52–84 (AGWK…AATH).

The protein is TPR repeat-containing protein PA0015 of Pseudomonas aeruginosa (strain ATCC 15692 / DSM 22644 / CIP 104116 / JCM 14847 / LMG 12228 / 1C / PRS 101 / PAO1).